The primary structure comprises 953 residues: Atromentin synthetase invA2 (953 aa).

An adenylation (A) domain region spans residues 38 to 460 (RAVSQYPNHE…SGRIKDTVIV (423 aa)). Residues 592–670 (APSTETEKTL…SLAKYVDSLI (79 aa)) form the Carrier domain. Residues 597 to 667 (TEKTLAGIYA…VISSLAKYVD (71 aa)) form a thiolation and peptide carrier (T) domain region. Position 629 is an O-(pantetheine 4'-phosphoryl)serine (S629). Positions 693–795 (PIFMVHPGVG…FTGLINIPPH (103 aa)) are thioesterase (TE) domain.

It belongs to the ATP-dependent AMP-binding enzyme family.

The protein operates within secondary metabolite biosynthesis. Functionally, an L-tyrosine:2-oxoglutarate aminotransferase (probably invD) and atromentin synthetase invA2 catalyze consecutive steps to turn over L-tyrosine into atromentin, which represents the generic precursor molecule for the entire terphenylquinone and pulvinic acid family of pigments, which are widely distributed secondary metabolites in homobasidiomycetes. The first step catalyzed by the aminotransferase converts L-tyrosine in to 4-hydroxyphenylpyruvate (4-HPP). Adenylation of two 4-HPP monomers by the invA2 adenylation (A) domain, covalent tethering of the monomers as a thioester and oxoester onto the invA2 thiolation (T) and thioesterase (TE) domains, respectively, and symmetric C-C-bond formation between two monomers catalyzed by the invA2 TE domain leads to atromentin. In Paxillus involutus (Naked brimcap), this protein is Atromentin synthetase invA2 (invA2).